The primary structure comprises 234 residues: Preprocaerulein type-4 (234 aa).

The signal sequence occupies residues M1 to A26. Positions D27–G73 are excised as a propeptide. A Sulfotyrosine modification is found at Y77. F83 carries the post-translational modification Phenylalanine amide. Positions D87–G137 are excised as a propeptide. Residue Y141 is modified to Sulfotyrosine. A Phenylalanine amide modification is found at F147. A propeptide spanning residues D151–G152 is cleaved from the precursor. The residue at position 156 (Y156) is a Sulfotyrosine. The residue at position 162 (F162) is a Phenylalanine amide. A propeptide spanning residues D166–G216 is cleaved from the precursor. The disordered stretch occupies residues L198–D234. Y220 is subject to Sulfotyrosine. F226 is subject to Phenylalanine amide. The propeptide occupies N230–D234.

The protein belongs to the gastrin/cholecystokinin family. Expressed by the skin glands.

It localises to the secreted. Functionally, the pharmacological activities of caerulein are quite similar to the physiological activities of gastrin and related peptides. This chain is Preprocaerulein type-4, found in Xenopus borealis (Kenyan clawed frog).